The following is a 397-amino-acid chain: Argininosuccinate synthase (397 aa).

Residue 7–15 (AFSGGLDTT) participates in ATP binding. Tyr84 is a binding site for L-citrulline. Residue Gly114 coordinates ATP. L-aspartate contacts are provided by Thr116, Asn120, and Asp121. Asn120 is a binding site for L-citrulline. Residues Arg124, Ser170, Ser179, Glu254, and Tyr266 each coordinate L-citrulline.

The protein belongs to the argininosuccinate synthase family. Type 1 subfamily. As to quaternary structure, homotetramer.

It is found in the cytoplasm. It carries out the reaction L-citrulline + L-aspartate + ATP = 2-(N(omega)-L-arginino)succinate + AMP + diphosphate + H(+). The protein operates within amino-acid biosynthesis; L-arginine biosynthesis; L-arginine from L-ornithine and carbamoyl phosphate: step 2/3. The chain is Argininosuccinate synthase from Haloquadratum walsbyi (strain DSM 16790 / HBSQ001).